Here is a 202-residue protein sequence, read N- to C-terminus: FMN-dependent NADH:quinone oxidoreductase (202 aa).

FMN contacts are provided by residues Ser-10, 16 to 18, and 96 to 99; these read SHS and MYNF.

The protein belongs to the azoreductase type 1 family. As to quaternary structure, homodimer. FMN serves as cofactor.

The catalysed reaction is 2 a quinone + NADH + H(+) = 2 a 1,4-benzosemiquinone + NAD(+). The enzyme catalyses N,N-dimethyl-1,4-phenylenediamine + anthranilate + 2 NAD(+) = 2-(4-dimethylaminophenyl)diazenylbenzoate + 2 NADH + 2 H(+). Quinone reductase that provides resistance to thiol-specific stress caused by electrophilic quinones. Its function is as follows. Also exhibits azoreductase activity. Catalyzes the reductive cleavage of the azo bond in aromatic azo compounds to the corresponding amines. The polypeptide is FMN-dependent NADH:quinone oxidoreductase (Hydrogenovibrio crunogenus (strain DSM 25203 / XCL-2) (Thiomicrospira crunogena)).